We begin with the raw amino-acid sequence, 184 residues long: Gastrokine-2 (184 aa).

The signal sequence occupies residues 1–20 (MKPLVAFLVVLSIFGIQSQA). The 98-residue stretch at 54 to 151 (HSGSCSSTTI…LCKHMPLYEG (98 aa)) folds into the BRICHOS domain. Cys81 and Cys143 are oxidised to a cystine.

As to quaternary structure, heterodimer with TFF1; disulfide linked. Interacts with TFF2. As to expression, stomach foveolar epithelium and duodenal Brunner's glands.

Its subcellular location is the secreted. The protein localises to the golgi apparatus. This chain is Gastrokine-2 (Gkn2), found in Mus musculus (Mouse).